The primary structure comprises 543 residues: Tetrahydroberberine oxidase (543 aa).

The N-terminal stretch at 1–26 (MIPNSSSSSILSLLVLLLFSTSSSWA) is a signal peptide. The cysteines at positions 37 and 97 are disulfide-linked. Asparagine 54, asparagine 74, asparagine 135, asparagine 142, asparagine 162, asparagine 295, asparagine 335, asparagine 440, and asparagine 482 each carry an N-linked (GlcNAc...) asparagine glycan. An FAD-binding PCMH-type domain is found at 75–250 (STQKPEFIIT…LSWKVKLVPV (176 aa)). Residues 112–175 (HDVEGLSYVS…NTLGFPAGFC (64 aa)) constitute a cross-link (6-(S-cysteinyl)-8alpha-(pros-histidyl)-FAD (His-Cys)).

It belongs to the oxygen-dependent FAD-linked oxidoreductase family. It depends on FAD as a cofactor. Post-translationally, the FAD cofactor is bound via a bicovalent 6-S-cysteinyl, 8alpha-N1-histidyl FAD linkage.

It catalyses the reaction (S)-canadine + 2 O2 + H(+) = berberine + 2 H2O2. Catalyzes the oxidation of different tetrahydroprotoberberines, such as (S)-canadine, (S)-scoulerine and (S)-tetrahydropalmatine. The sequence is that of Tetrahydroberberine oxidase from Argemone mexicana (Mexican prickly poppy).